Consider the following 112-residue polypeptide: Putative pterin-4-alpha-carbinolamine dehydratase (112 aa).

It belongs to the pterin-4-alpha-carbinolamine dehydratase family.

It carries out the reaction (4aS,6R)-4a-hydroxy-L-erythro-5,6,7,8-tetrahydrobiopterin = (6R)-L-erythro-6,7-dihydrobiopterin + H2O. The chain is Putative pterin-4-alpha-carbinolamine dehydratase from Shewanella amazonensis (strain ATCC BAA-1098 / SB2B).